The sequence spans 837 residues: Striatin-interacting protein 1 (837 aa).

Residue methionine 1 is modified to N-acetylmethionine. Disordered regions lie at residues 1-67 (MEPA…ESPD) and 333-423 (AASP…KGLP). Positions 18–35 (PQPPPPPPPATAQPPPGA) are enriched in pro residues. The span at 36 to 46 (PRAAAGLLPGG) shows a compositional bias: low complexity. Residues 47–60 (KAREFNRNQRKDSE) show a composition bias toward basic and acidic residues. Serine 59, serine 335, and serine 339 each carry phosphoserine. Residues 333-343 (AASPPASASDS) are compositionally biased toward low complexity. The segment covering 356–377 (KALIKQDNLDAFNERDPYKADD) has biased composition (basic and acidic residues). The span at 378–391 (SREEEEENDDDNSL) shows a compositional bias: acidic residues. Serine 788 is modified (phosphoserine). The interval 796–837 (DNCLQSVLGQRVDLPEDFQMNYDLWLEREVFSKPISWEELLQ) is required for STRIPAK core complex formation.

The protein belongs to the STRIP family. Part of the core of STRIPAK complexes composed of PP2A catalytic and scaffolding subunits, the striatins (PP2A regulatory subunits), the striatin-associated proteins MOB4, STRIP1 and STRIP2, PDCD10 and members of the STE20 kinases, such as STK24 and STK26. The STRIPAK complex can be extended by adapter proteins such as SLMAP:SIKE1, CTTNBP2 or CTTNBP2NL. Interacts with CDC42BPB. Interacts with CTTNBP2NL.

It localises to the cytoplasm. Functionally, plays a role in the regulation of cell morphology and cytoskeletal organization. Required in the cortical actin filament dynamics and cell shape. Part of the striatin-interacting phosphatase and kinase (STRIPAK) complexes. STRIPAK complexes have critical roles in protein (de)phosphorylation and are regulators of multiple signaling pathways including Hippo, MAPK, nuclear receptor and cytoskeleton remodeling. Different types of STRIPAK complexes are involved in a variety of biological processes such as cell growth, differentiation, apoptosis, metabolism and immune regulation. The sequence is that of Striatin-interacting protein 1 (STRIP1) from Pongo abelii (Sumatran orangutan).